We begin with the raw amino-acid sequence, 492 residues long: Stromelysin-3 (492 aa).

Residues 1–35 (MARAACLLRAISRVLLLPLPLLLLLLLLLPSPLMA) form the signal peptide. The propeptide at 36–101 (RARPPESHRH…VLNARNRQKR (66 aa)) is activation peptide. The Cysteine switch motif lies at 82–89 (LRCGVPDL). Positions 84, 168, and 170 each coordinate Zn(2+). Asp-175, Gly-176, Gly-178, and Ile-180 together coordinate Ca(2+). Zn(2+) is bound by residues His-183, His-196, and His-219. Glu-220 is a catalytic residue. Positions 223 and 229 each coordinate Zn(2+). Hemopexin repeat units lie at residues 295–343 (PDVC…WQGL), 344–386 (PSPV…KLGL), 388–436 (GSPV…WRGV), and 437–484 (PSEI…FFDC). An intrachain disulfide couples Cys-298 to Cys-484.

Belongs to the peptidase M10A family. Requires Ca(2+) as cofactor. The cofactor is Zn(2+). Post-translationally, the precursor is cleaved by a furin endopeptidase. In terms of tissue distribution, specifically expressed in the mammary gland during apoptosis.

The protein localises to the secreted. It is found in the extracellular space. The protein resides in the extracellular matrix. May play an important role in the progression of epithelial malignancies. This is Stromelysin-3 (Mmp11) from Mus musculus (Mouse).